The chain runs to 316 residues: Ribosomal RNA small subunit methyltransferase H (316 aa).

Residues Gly39 to His41, Asp56, Phe82, Asp103, and Gln110 each bind S-adenosyl-L-methionine.

The protein belongs to the methyltransferase superfamily. RsmH family.

It localises to the cytoplasm. The enzyme catalyses cytidine(1402) in 16S rRNA + S-adenosyl-L-methionine = N(4)-methylcytidine(1402) in 16S rRNA + S-adenosyl-L-homocysteine + H(+). In terms of biological role, specifically methylates the N4 position of cytidine in position 1402 (C1402) of 16S rRNA. In Methylacidiphilum infernorum (isolate V4) (Methylokorus infernorum (strain V4)), this protein is Ribosomal RNA small subunit methyltransferase H.